The following is a 214-amino-acid chain: Redox-sensing transcriptional repressor Rex (214 aa).

The H-T-H motif DNA-binding region spans 16-55 (LYYRYLIFLNDEGKEKVSSTELAEAVQVDSASIRRDFSYF). An NAD(+)-binding site is contributed by 90 to 95 (GVGNMG).

This sequence belongs to the transcriptional regulatory Rex family. Homodimer.

Its subcellular location is the cytoplasm. Modulates transcription in response to changes in cellular NADH/NAD(+) redox state. The sequence is that of Redox-sensing transcriptional repressor Rex from Lactobacillus gasseri (strain ATCC 33323 / DSM 20243 / BCRC 14619 / CIP 102991 / JCM 1131 / KCTC 3163 / NCIMB 11718 / NCTC 13722 / AM63).